Reading from the N-terminus, the 99-residue chain is Leydig cell tumor 10 kDa protein homolog (99 aa).

The segment at 1–36 is disordered; sequence MAQGQRKFQAHKPAKSKTAAAASEKNRGPRKGGRVI.

Belongs to the UPF0390 family.

Its function is as follows. May have a potential role in hypercalcemia of malignancy. The polypeptide is Leydig cell tumor 10 kDa protein homolog (C19orf53) (Homo sapiens (Human)).